A 425-amino-acid chain; its full sequence is Serine--tRNA ligase (425 aa).

Residue 233–235 (TAE) participates in L-serine binding. 264–266 (RRE) is a binding site for ATP. Residue Glu-287 coordinates L-serine. 351–354 (EISS) is a binding site for ATP. Ser-385 contacts L-serine.

It belongs to the class-II aminoacyl-tRNA synthetase family. Type-1 seryl-tRNA synthetase subfamily. Homodimer. The tRNA molecule binds across the dimer.

The protein resides in the cytoplasm. It catalyses the reaction tRNA(Ser) + L-serine + ATP = L-seryl-tRNA(Ser) + AMP + diphosphate + H(+). The catalysed reaction is tRNA(Sec) + L-serine + ATP = L-seryl-tRNA(Sec) + AMP + diphosphate + H(+). Its pathway is aminoacyl-tRNA biosynthesis; selenocysteinyl-tRNA(Sec) biosynthesis; L-seryl-tRNA(Sec) from L-serine and tRNA(Sec): step 1/1. Catalyzes the attachment of serine to tRNA(Ser). Is also able to aminoacylate tRNA(Sec) with serine, to form the misacylated tRNA L-seryl-tRNA(Sec), which will be further converted into selenocysteinyl-tRNA(Sec). This is Serine--tRNA ligase from Prochlorococcus marinus (strain MIT 9515).